A 717-amino-acid polypeptide reads, in one-letter code: Serologically defined colon cancer antigen 8 homolog (717 aa).

Phosphoserine is present on residues serine 4 and serine 28. Residues 84-115 form a disordered region; that stretch reads QTNKENETSPPRRRKLSPSRPSECDDGSMPTM. 4 coiled-coil regions span residues 129–168, 221–278, 352–590, and 622–712; these read IHHL…KSQR, DANK…LAAS, EEAN…SEQY, and RSQI…LPSM. A sufficient for homodimerization region spans residues 216-717; the sequence is TASTGDANKW…QLPSMPQSDC (502 aa).

In terms of assembly, homodimer. Interacts with OFD1; the interaction is direct. Interacts with FAM161A. Interacts with RABEP2, ERC1 and CEP131. In terms of tissue distribution, expressed in liver, kidney, spleen, brain, heart and muscle. Expressed in photoreceptor cells of the retina.

The protein resides in the cytoplasm. The protein localises to the cytoskeleton. It localises to the microtubule organizing center. It is found in the centrosome. Its subcellular location is the centriole. The protein resides in the cilium basal body. The protein localises to the cell junction. Its function is as follows. Plays a role in the establishment of cell polarity and epithelial lumen formation. Also plays an essential role in ciliogenesis and subsequent Hedgehog signaling pathway that requires the presence of intact primary cilia for pathway activation. Mechanistically, interacts with and mediates RABEP2 centrosomal localization which is critical for ciliogenesis. The polypeptide is Serologically defined colon cancer antigen 8 homolog (Sdccag8) (Mus musculus (Mouse)).